Consider the following 128-residue polypeptide: Large ribosomal subunit protein bL19 (128 aa).

This sequence belongs to the bacterial ribosomal protein bL19 family.

Its function is as follows. This protein is located at the 30S-50S ribosomal subunit interface and may play a role in the structure and function of the aminoacyl-tRNA binding site. This chain is Large ribosomal subunit protein bL19, found in Bradyrhizobium sp. (strain ORS 278).